A 392-amino-acid chain; its full sequence is Mycofactocin maturase MftC (392 aa).

The Radical SAM core domain maps to 18-228; it reads LDAPICLTWE…YDWLVAKGDR (211 aa). Positions 32, 36, 39, 253, 260, 271, 312, 315, 321, 325, and 343 each coordinate [4Fe-4S] cluster. The span at 354–367 shows a compositional bias: basic and acidic residues; the sequence is KERVKPKPSGDHSR. The segment at 354 to 377 is disordered; sequence KERVKPKPSGDHSRGTKQGPVALK.

It belongs to the radical SAM superfamily. MftC family. [4Fe-4S] cluster serves as cofactor.

It carries out the reaction [mycofactocin precursor peptide]-C-terminal glycyl-L-valyl-L-tyrosine + S-adenosyl-L-methionine = [mycofactocin precursor peptide]-C-terminal glycyl-N-{[2-(4-hydroxyphenyl)ethenyl]-3-methylbutanamide} + 5'-deoxyadenosine + L-methionine + CO2. The catalysed reaction is [mycofactocin precursor peptide]-C-terminal glycyl-N-{[2-(4-hydroxyphenyl)ethenyl]-3-methylbutanamide} + AH2 + S-adenosyl-L-methionine = [mycofactocin precursor peptide]-C-terminal glycyl-N-{5-[(4-hydroxyphenyl)methyl]-4,4-dimethyl-2-oxopyrrolidin-3-yl}acetamide + 5'-deoxyadenosine + L-methionine + A + H(+). Radical S-adenosylmethionine (SAM) enzyme responsible for the first step of the biosynthesis of the enzyme cofactor mycofactocin (MFT). Catalyzes two reactions at the C-terminus of the mycofactocin precursor (the MftA peptide). The first one is the oxidative decarboxylation of the C-terminal L-tyrosine of MftA, forming an unsaturated tyramine moiety. The second reaction is the cross-linking of the tyramine with the penultimate L-valine residue, forming a five-membered lactam ring. Its activity requires the presence of the MftB chaperone. Is required for the in vivo ethanol assimilation in M.smegmatis. This chain is Mycofactocin maturase MftC, found in Mycolicibacterium smegmatis (strain ATCC 700084 / mc(2)155) (Mycobacterium smegmatis).